The chain runs to 1409 residues: DNA-directed RNA polymerase subunit beta' (1409 aa).

Zn(2+) contacts are provided by Cys70, Cys72, Cys85, and Cys88. Mg(2+)-binding residues include Asp458, Asp460, and Asp462. 4 residues coordinate Zn(2+): Cys813, Cys887, Cys894, and Cys897. Residues 1385 to 1403 show a composition bias toward low complexity; it reads EAAELAGSTSDVSTTADAS. Positions 1385–1409 are disordered; that stretch reads EAAELAGSTSDVSTTADASEGAASE.

The protein belongs to the RNA polymerase beta' chain family. The RNAP catalytic core consists of 2 alpha, 1 beta, 1 beta' and 1 omega subunit. When a sigma factor is associated with the core the holoenzyme is formed, which can initiate transcription. Requires Mg(2+) as cofactor. It depends on Zn(2+) as a cofactor.

The enzyme catalyses RNA(n) + a ribonucleoside 5'-triphosphate = RNA(n+1) + diphosphate. Functionally, DNA-dependent RNA polymerase catalyzes the transcription of DNA into RNA using the four ribonucleoside triphosphates as substrates. This chain is DNA-directed RNA polymerase subunit beta', found in Variovorax paradoxus (strain S110).